We begin with the raw amino-acid sequence, 370 residues long: D-aspartate oxidase (370 aa).

The signal sequence occupies residues 1 to 18 (MPPRIIILGAGIIGLSTA). Positions 13, 42, 63, 64, and 68 each coordinate FAD. Residue asparagine 207 is glycosylated (N-linked (GlcNAc...) asparagine). The FAD site is built by arginine 308, glycine 338, and tyrosine 339.

Belongs to the DAMOX/DASOX family. In terms of assembly, monomer. Requires FAD as cofactor.

The catalysed reaction is D-aspartate + O2 + H2O = oxaloacetate + H2O2 + NH4(+). It carries out the reaction D-glutamate + O2 + H2O = H2O2 + 2-oxoglutarate + NH4(+). Selectively catalyzes the oxidative deamination of acidic amino acids. Protects the organism from the toxicity of D-amino acids. Enables the organism to utilize D-amino acids as a source of nutrients. The sequence is that of D-aspartate oxidase from Talaromyces thermophilus.